A 170-amino-acid polypeptide reads, in one-letter code: Large ribosomal subunit protein uL15 (170 aa).

Over residues 1-12 (MKLHDLRPAEGA) the composition is skewed to basic and acidic residues. Residues 1 to 52 (MKLHDLRPAEGAHRKRKRIGRGHGSGKGKTGGKGMMGQKARSGPGPYRTFEG) are disordered. Residues 13–26 (HRKRKRIGRGHGSG) are compositionally biased toward basic residues.

The protein belongs to the universal ribosomal protein uL15 family. In terms of assembly, part of the 50S ribosomal subunit.

Its function is as follows. Binds to the 23S rRNA. The protein is Large ribosomal subunit protein uL15 of Chloroflexus aurantiacus (strain ATCC 29366 / DSM 635 / J-10-fl).